A 600-amino-acid polypeptide reads, in one-letter code: NADH-quinone oxidoreductase subunit C/D (600 aa).

The interval M1 to Q190 is NADH dehydrogenase I subunit C. The interval D214–R600 is NADH dehydrogenase I subunit D.

In the N-terminal section; belongs to the complex I 30 kDa subunit family. The protein in the C-terminal section; belongs to the complex I 49 kDa subunit family. NDH-1 is composed of 13 different subunits. Subunits NuoB, CD, E, F, and G constitute the peripheral sector of the complex.

The protein localises to the cell inner membrane. It catalyses the reaction a quinone + NADH + 5 H(+)(in) = a quinol + NAD(+) + 4 H(+)(out). NDH-1 shuttles electrons from NADH, via FMN and iron-sulfur (Fe-S) centers, to quinones in the respiratory chain. The immediate electron acceptor for the enzyme in this species is believed to be ubiquinone. Couples the redox reaction to proton translocation (for every two electrons transferred, four hydrogen ions are translocated across the cytoplasmic membrane), and thus conserves the redox energy in a proton gradient. This Escherichia coli O127:H6 (strain E2348/69 / EPEC) protein is NADH-quinone oxidoreductase subunit C/D.